The chain runs to 193 residues: 2',3'-cyclic-nucleotide 3'-phosphodiesterase (193 aa).

The active-site Proton donor/acceptor is the H40. T42 contributes to the substrate binding site. The active-site Proton donor/acceptor is the H129. S131 and Y134 together coordinate substrate.

This sequence belongs to the 2H phosphoesterase superfamily. CPD1 family.

Its subcellular location is the golgi apparatus. The enzyme catalyses a nucleoside 2',3'-cyclic phosphate + H2O = a nucleoside 2'-phosphate + H(+). Functionally, involved in the metabolism of ADP-ribose 1',2'-cyclic phosphate which is produced as a consequence of tRNA splicing. The polypeptide is 2',3'-cyclic-nucleotide 3'-phosphodiesterase (CPD1) (Phaeosphaeria nodorum (strain SN15 / ATCC MYA-4574 / FGSC 10173) (Glume blotch fungus)).